An 829-amino-acid polypeptide reads, in one-letter code: Exocyst complex component SEC10b (829 aa).

Residues 244–266 adopt a coiled-coil conformation; the sequence is RGLEVAVANLQDYCNELENRLLS.

This sequence belongs to the SEC10 family. As to quaternary structure, the exocyst complex is composed of SEC3, SEC5, SEC6, SEC8, SEC10, EXO70A1 and EXO84B. Interacts with EXO84B. Binds to EXO70E2. Expressed in seedlings, roots, leaves and flowers.

The protein resides in the cytoplasm. Its subcellular location is the cytosol. The protein localises to the secreted. It localises to the extracellular exosome. Its function is as follows. Component of the exocyst complex involved in the docking of exocytic vesicles with fusion sites on the plasma membrane during regulated or polarized secretion. Involved in polarized cell growth and organ morphogenesis. During cytokinesis, involved in cell plate initiation, cell plate maturation and formation of new primary cell wall. This Arabidopsis thaliana (Mouse-ear cress) protein is Exocyst complex component SEC10b.